A 308-amino-acid polypeptide reads, in one-letter code: Glutamyl-Q tRNA(Asp) synthetase (308 aa).

L-glutamate is bound by residues 19–23 (RFAPS) and E55. The 'HIGH' region signature appears at 22-32 (PSPSGELHFGS). Zn(2+) is bound by residues C111, C113, Y125, and C129. 2 residues coordinate L-glutamate: Y182 and R200. A 'KMSKS' region motif is present at residues 238-242 (KLSKQ). ATP is bound at residue K241.

Belongs to the class-I aminoacyl-tRNA synthetase family. GluQ subfamily. It depends on Zn(2+) as a cofactor.

Catalyzes the tRNA-independent activation of glutamate in presence of ATP and the subsequent transfer of glutamate onto a tRNA(Asp). Glutamate is transferred on the 2-amino-5-(4,5-dihydroxy-2-cyclopenten-1-yl) moiety of the queuosine in the wobble position of the QUC anticodon. This is Glutamyl-Q tRNA(Asp) synthetase from Shigella flexneri.